The following is a 356-amino-acid chain: Tyrosine recombinase XerS (356 aa).

One can recognise a Core-binding (CB) domain in the interval 16–121 (VMPWYVLDYY…ALSSLYKYLT (106 aa)). A Tyr recombinase domain is found at 169 to 354 (AFLDYVDKEY…VNDEQKNALD (186 aa)). Active-site residues include R210, K234, H306, R309, and H332. Y341 functions as the O-(3'-phospho-DNA)-tyrosine intermediate in the catalytic mechanism.

It belongs to the 'phage' integrase family. XerS subfamily.

It is found in the cytoplasm. FtsK is required for recombination. Its function is as follows. Site-specific tyrosine recombinase, which acts by catalyzing the cutting and rejoining of the recombining DNA molecules. Essential to convert dimers of the bacterial chromosome into monomers to permit their segregation at cell division. This chain is Tyrosine recombinase XerS, found in Streptococcus pyogenes serotype M28 (strain MGAS6180).